Consider the following 129-residue polypeptide: Follitropin subunit beta (129 aa).

A signal peptide spans 1–20; sequence MKTVQFCFLFCCWKAICCNS. Intrachain disulfides connect cysteine 21–cysteine 69, cysteine 35–cysteine 84, cysteine 38–cysteine 122, cysteine 46–cysteine 100, cysteine 50–cysteine 102, and cysteine 105–cysteine 112. Residues asparagine 25 and asparagine 42 are each glycosylated (N-linked (GlcNAc...) asparagine).

It belongs to the glycoprotein hormones subunit beta family. Heterodimer. The active follitropin is a heterodimer composed of an alpha chain/CGA shared with other hormones and a unique beta chain/FSHB shown here.

The protein localises to the secreted. Its function is as follows. Together with the alpha chain CGA constitutes follitropin, the follicle-stimulating hormone, and provides its biological specificity to the hormone heterodimer. Binds FSHR, a G protein-coupled receptor, on target cells to activate downstream signaling pathways. Follitropin is involved in follicle development and spermatogenesis in reproductive organs. The sequence is that of Follitropin subunit beta (FSHB) from Saimiri boliviensis boliviensis (Bolivian squirrel monkey).